Reading from the N-terminus, the 232-residue chain is MSACQTPVIVALDFPTREAALRLADQLDPKLCRVKVGKELFISCAADIVETLRNKGFEVFLDLKFHDIPNTTAMAVKAAAEMGVWMVNVHCSGGLRMMTACREVLEQRSGPQPLLIGVTVLTSMEREDLAGIGLDIDPQVQVLRLAALAEKAGLDGLVCSALEAQALKAAHPSLQLVTPGIRPAGSAQDDQRRILTPRQALDAGSDHLVIGRPISQAADPAKALAAVVAELA.

Substrate contacts are provided by residues aspartate 13, lysine 35, 62-71 (DLKFHDIPNT), threonine 122, arginine 182, glutamine 191, glycine 211, and arginine 212. Lysine 64 serves as the catalytic Proton donor.

The protein belongs to the OMP decarboxylase family. Type 1 subfamily. As to quaternary structure, homodimer.

The catalysed reaction is orotidine 5'-phosphate + H(+) = UMP + CO2. Its pathway is pyrimidine metabolism; UMP biosynthesis via de novo pathway; UMP from orotate: step 2/2. Functionally, catalyzes the decarboxylation of orotidine 5'-monophosphate (OMP) to uridine 5'-monophosphate (UMP). The polypeptide is Orotidine 5'-phosphate decarboxylase (Pseudomonas savastanoi pv. phaseolicola (strain 1448A / Race 6) (Pseudomonas syringae pv. phaseolicola (strain 1448A / Race 6))).